Consider the following 144-residue polypeptide: L-fucose mutarotase (144 aa).

His22 acts as the Proton donor in catalysis. Substrate is bound by residues Asp30, Arg109, and Tyr131–Asn133.

This sequence belongs to the RbsD / FucU family. FucU mutarotase subfamily. As to quaternary structure, homodecamer.

It is found in the cytoplasm. It carries out the reaction alpha-L-fucose = beta-L-fucose. It participates in carbohydrate metabolism; L-fucose metabolism. Involved in the anomeric conversion of L-fucose. The chain is L-fucose mutarotase from Haemophilus influenzae (strain 86-028NP).